The primary structure comprises 213 residues: N-(5'-phosphoribosyl)anthranilate isomerase (213 aa).

It belongs to the TrpF family.

It carries out the reaction N-(5-phospho-beta-D-ribosyl)anthranilate = 1-(2-carboxyphenylamino)-1-deoxy-D-ribulose 5-phosphate. It functions in the pathway amino-acid biosynthesis; L-tryptophan biosynthesis; L-tryptophan from chorismate: step 3/5. The protein is N-(5'-phosphoribosyl)anthranilate isomerase of Hahella chejuensis (strain KCTC 2396).